Here is a 162-residue protein sequence, read N- to C-terminus: Peroxiredoxin-2B (162 aa).

A Thioredoxin domain is found at 4-162 (IAVGDVVPDG…SSADDILKAL (159 aa)). Cys51 functions as the Cysteine sulfenic acid (-SOH) intermediate in the catalytic mechanism.

It belongs to the peroxiredoxin family. Prx5 subfamily. Monomer. In terms of tissue distribution, expressed in all tissues but mostly in reproductive tissues such as buds, flowers, siliques and seeds.

It is found in the cytoplasm. It catalyses the reaction [glutaredoxin]-dithiol + a hydroperoxide = [glutaredoxin]-disulfide + an alcohol + H2O. Reduces hydrogen peroxide and alkyl hydroperoxides with reducing equivalents provided through the thioredoxin or glutaredoxin system. May be involved in intracellular redox signaling. In terms of biological role, thiol-specific peroxidase that catalyzes the reduction of hydrogen peroxide and organic hydroperoxides to water and alcohols, respectively. Plays a role in cell protection against oxidative stress by detoxifying peroxides and as sensor of hydrogen peroxide-mediated signaling events. The chain is Peroxiredoxin-2B (PRXIIB) from Arabidopsis thaliana (Mouse-ear cress).